A 229-amino-acid polypeptide reads, in one-letter code: Orotidine 5'-phosphate decarboxylase (229 aa).

Substrate is bound by residues Asp-9, Lys-31, 58–67 (DLKLFDIPNT), Thr-121, Arg-179, Gln-188, Gly-208, and Arg-209. The active-site Proton donor is the Lys-60.

This sequence belongs to the OMP decarboxylase family. Type 1 subfamily. Homodimer.

The catalysed reaction is orotidine 5'-phosphate + H(+) = UMP + CO2. The protein operates within pyrimidine metabolism; UMP biosynthesis via de novo pathway; UMP from orotate: step 2/2. In terms of biological role, catalyzes the decarboxylation of orotidine 5'-monophosphate (OMP) to uridine 5'-monophosphate (UMP). The chain is Orotidine 5'-phosphate decarboxylase from Lawsonia intracellularis (strain PHE/MN1-00).